The following is a 610-amino-acid chain: MSERFDAVAFLKTVTNQPGVYRMYDAGAEVIYVGKAKDLKKRLSSYFRCQLASRKTEALVRQIAQIDVTVTHTETEALLLEHNYIKRYQPRYNVLLRDDKSYPLIFLSADRHPRLAVHRGARRARGDYFGPFPNANAVRETLALLQKLFPIRQCEDSVYRNRSRPCLQYQIQRCLGPCVTGLVNDGEYARQVEYVRLFLSGKDSQVIDALVARMEEASRALRFEEAARLRDQIQAVRRVTERQFISGDHEDIDVIGVAFEAGMACIHVLFIRHGQVLGSRSYFPRVPAGTTLAEVLQTFVGQFYLQGSQIRTLPGEILIDFLLPDRKLLADSISELAGRRIPIQSQPRGDRARYLKLARTNAVTALNSKLSQQSTILQRLVQLEQVLQRADIQRMECFDISHTMGEETVASCVVFDRNGPLRSEYRRYNIKGITPGDDYAAMDQVLRRRYDKALNEEKIPDIIFIDGGKGQLGQAKQVFAELEVPWDTHRPLLLGIAKGSDRKAGLETLFFEAQGEGFSLPPDSPALHLIQHIRDESHNHAIAGHRKRRAKVRSTSALESIEGIGPKRRQLLLKYMGGMQPLRDASIDEIAKVPGISAALAEKIHYALKQ.

In terms of domain architecture, GIY-YIG spans 16-94 (NQPGVYRMYD…IKRYQPRYNV (79 aa)). The UVR domain occupies 204-239 (SQVIDALVARMEEASRALRFEEAARLRDQIQAVRRV).

This sequence belongs to the UvrC family. Interacts with UvrB in an incision complex.

It is found in the cytoplasm. The UvrABC repair system catalyzes the recognition and processing of DNA lesions. UvrC both incises the 5' and 3' sides of the lesion. The N-terminal half is responsible for the 3' incision and the C-terminal half is responsible for the 5' incision. This is UvrABC system protein C from Edwardsiella ictaluri (strain 93-146).